Consider the following 201-residue polypeptide: MAEKFIKHTGLVVPLDAANVDTDAIIPKQFLQKVTRTGFGAHLFNDWRFLDEKGQQPNPDFVLNFPQYQGASILLARENFGCGSSREHAPWALTDYGFKVVIAPSFADIFYGNSFNNQLLPVKLSDAEVDELFALVKANPGIHFDVDLEAQEVKAGEKTYRFTIDAFRRHCMMNGLDSIGLTLQHDDAIASYEAKQPAFMN.

It belongs to the LeuD family. LeuD type 1 subfamily. In terms of assembly, heterodimer of LeuC and LeuD.

The enzyme catalyses (2R,3S)-3-isopropylmalate = (2S)-2-isopropylmalate. Its pathway is amino-acid biosynthesis; L-leucine biosynthesis; L-leucine from 3-methyl-2-oxobutanoate: step 2/4. Its function is as follows. Catalyzes the isomerization between 2-isopropylmalate and 3-isopropylmalate, via the formation of 2-isopropylmaleate. This chain is 3-isopropylmalate dehydratase small subunit, found in Shigella flexneri serotype 5b (strain 8401).